We begin with the raw amino-acid sequence, 101 residues long: MDISKLTDVKKVDLCKKYFLIGACFLPLVWIVNTFWFFSDAFCKPINAHRRQIRKYVIASIVGSIFWIIVLSAWEIFFQHYRAQGLVWTDFLTFVFPTGRV.

Residues 1–17 (MDISKLTDVKKVDLCKK) are Lumenal-facing. Residues 18 to 38 (YFLIGACFLPLVWIVNTFWFF) form a helical membrane-spanning segment. At 39 to 57 (SDAFCKPINAHRRQIRKYV) the chain is on the cytoplasmic side. A helical transmembrane segment spans residues 58-78 (IASIVGSIFWIIVLSAWEIFF). The Lumenal portion of the chain corresponds to 79 to 101 (QHYRAQGLVWTDFLTFVFPTGRV).

The protein belongs to the PEN-2 family. Component of the gamma-secretase complex, a complex probably composed of the presenilin homodimer (sel-12, hop-1 or spe-4), nicastrin (aph-2), aph-1 and pen-2. Expressed from 100-cell stage in most somatic tissues, including neurons, muscle, intestine and developing vulva. Little or not expressed in early embryos.

It is found in the endoplasmic reticulum membrane. It localises to the golgi apparatus membrane. Its function is as follows. Essential subunit of the gamma-secretase complex, an endoprotease complex that catalyzes the intramembrane cleavage of integral membrane proteins such as Notch (glp-1 or lin-12). It may represent a stabilizing cofactor for the presenilin homodimer that promotes the formation of a stable complex. The chain is Gamma-secretase subunit pen-2 (pen-2) from Caenorhabditis elegans.